The following is a 122-amino-acid chain: Large ribosomal subunit protein uL14 (122 aa).

The protein belongs to the universal ribosomal protein uL14 family. Part of the 50S ribosomal subunit. Forms a cluster with proteins L3 and L19. In the 70S ribosome, L14 and L19 interact and together make contacts with the 16S rRNA in bridges B5 and B8.

Its function is as follows. Binds to 23S rRNA. Forms part of two intersubunit bridges in the 70S ribosome. The protein is Large ribosomal subunit protein uL14 of Leuconostoc citreum (strain KM20).